The primary structure comprises 191 residues: Chromobox protein homolog 5 (191 aa).

Phosphoserine occurs at positions 11, 12, 13, and 14. The Chromo 1 domain occupies 20-78; the sequence is YVVEKVLDRRVVKGQVEYLLKWKGFSEEHNTWEPEKNLDCPELISEFMKKYKKMKEGEN. Residue lysine 32 forms a Glycyl lysine isopeptide (Lys-Gly) (interchain with G-Cter in SUMO2) linkage. Lysine 40 bears the N6-acetyllysine mark. The disordered stretch occupies residues 70 to 117; the sequence is YKKMKEGENNKPREKSESNKRKSNFSNSADDIKSKKKREQSNDIARGF. Residues 73-89 are compositionally biased toward basic and acidic residues; sequence MKEGENNKPREKSESNK. A Glycyl lysine isopeptide (Lys-Gly) (interchain with G-Cter in SUMO2) cross-link involves residue lysine 91. A phosphoserine mark is found at serine 92, serine 95, and serine 97. Glycyl lysine isopeptide (Lys-Gly) (interchain with G-Cter in SUMO2) cross-links involve residues lysine 102, lysine 106, lysine 154, and lysine 184. The region spanning 121–179 is the Chromo 2; shadow subtype domain; that stretch reads LEPEKIIGATDSCGDLMFLMKWKDTDEADLVLAKEANVKCPQIVIAFYEERLTWHAYPE.

In terms of assembly, homodimer. Interacts with histone H3 methylated at 'Lys-9'. Interacts (via Chromo 2; shadow subtype domain) with the MIS12 complex subunit NSL1; the interaction is direct, involves dimeric CBX5, and occurs during interphase. Interacts with POGZ; POGZ and PXVXL motif-containing proteins such as INCENP and TRIM28 compete for interaction with CBX5. Interacts with LRIF1 (via PxVxL motif). Interacts with INCENP. Interacts with TRIM24. Interacts (via the chromoshadow domain) with ATRX; the interaction is direct. Interacts (via the chromoshadow domain) with CHAF1A; the interaction is direct. Interacts (via the chromoshadow domain) with LBR; the interaction is direct. Interacts (via the chromoshadow domain) with NIPBL; the interaction is direct. Interacts (via the chromoshadow domain) with SP100; the interaction is direct. Interacts (via the chromoshadow domain) with STAM2; the interaction is direct. Interacts (via the chromoshadow domain) with TRIM28; the interaction is direct. Interacts (via the chromoshadow domain) with CBX3; the interaction is direct. Interacts with PRR14 (via N-terminus). Interacts with RRP1B. Interacts with HNRNPU (via C-terminus); this interaction is, at least in part, RNA-dependent. Interacts with ZNF263; recruited to the SIX3 promoter along with other proteins involved in chromatin modification and transcriptional corepression where it contributes to transcriptional repression. Interacts with AURKB during mitosis. Interacts with CHAMP1. Interacts with BAHD1. Interacts with HP1BP3. Interacts with CHD3. Interacts with CHD4. Interacts with SMYD5. Interacts with KMT5B. Interacts with KMT5C. As to quaternary structure, (Microbial infection) Interacts with JC virus agnoprotein; this interaction induces the dissociation of CBX5 from LBR, resulting in destabilization of the nuclear envelope. Phosphorylation of HP1 and LBR may be responsible for some of the alterations in chromatin organization and nuclear structure which occur at various times during the cell cycle. Phosphorylated during interphase and possibly hyper-phosphorylated during mitosis. Post-translationally, ubiquitinated.

The protein resides in the nucleus. Its subcellular location is the chromosome. The protein localises to the centromere. Component of heterochromatin that recognizes and binds histone H3 tails methylated at 'Lys-9' (H3K9me), leading to epigenetic repression. In contrast, it is excluded from chromatin when 'Tyr-41' of histone H3 is phosphorylated (H3Y41ph). May contribute to the association of heterochromatin with the inner nuclear membrane by interactions with the lamin-B receptor (LBR). Involved in the formation of kinetochore through interaction with the MIS12 complex subunit NSL1. Required for the formation of the inner centromere. In Homo sapiens (Human), this protein is Chromobox protein homolog 5 (CBX5).